Here is a 338-residue protein sequence, read N- to C-terminus: Anthranilate phosphoribosyltransferase (338 aa).

5-phospho-alpha-D-ribose 1-diphosphate is bound by residues glycine 78, 81 to 82 (GD), threonine 86, 88 to 91 (NIST), 106 to 114 (KHGNRSVSS), and serine 118. Glycine 78 is a binding site for anthranilate. Serine 90 provides a ligand contact to Mg(2+). Asparagine 109 serves as a coordination point for anthranilate. Arginine 164 contacts anthranilate. Mg(2+) contacts are provided by aspartate 223 and glutamate 224.

The protein belongs to the anthranilate phosphoribosyltransferase family. In terms of assembly, homodimer. Mg(2+) is required as a cofactor.

It carries out the reaction N-(5-phospho-beta-D-ribosyl)anthranilate + diphosphate = 5-phospho-alpha-D-ribose 1-diphosphate + anthranilate. It participates in amino-acid biosynthesis; L-tryptophan biosynthesis; L-tryptophan from chorismate: step 2/5. In terms of biological role, catalyzes the transfer of the phosphoribosyl group of 5-phosphorylribose-1-pyrophosphate (PRPP) to anthranilate to yield N-(5'-phosphoribosyl)-anthranilate (PRA). This chain is Anthranilate phosphoribosyltransferase, found in Bacillus subtilis (strain 168).